A 153-amino-acid chain; its full sequence is MLLRDLVLRRGCCWSSLLLHCALHPLWGFVQVTHGEPQKSCSKVTDSCRHVCQCRPPPPLPPPPPPPPPPRLLSAPAPNSTSCPTEESWWSGLVIIIAVCCASLVFLTVLVIICYKAIKRKPLRKDENGTSVAEYPMSASQSNKGVDVNNAVV.

Positions Met1–Gly35 are cleaved as a signal peptide. At Glu36–Gly92 the chain is on the extracellular side. The PRAD domain maps to Pro56 to Pro70. Residues Pro59–Arg71 are compositionally biased toward pro residues. Residues Pro59–Asn79 form a disordered region. The N-linked (GlcNAc...) asparagine glycan is linked to Asn79. The helical transmembrane segment at Leu93 to Ile113 threads the bilayer. Over Cys114–Val153 the chain is Cytoplasmic.

As to quaternary structure, interacts with ACHE, probably through disulfide bonds.

The protein localises to the cell membrane. It is found in the cell junction. It localises to the synapse. Functionally, required to anchor acetylcholinesterase (ACHE) to the basal lamina of the neuromuscular junction and to the membrane of neuronal synapses in brain. Also able to organize ACHE into tetramers. The sequence is that of Proline-rich membrane anchor 1 (PRIMA1) from Homo sapiens (Human).